We begin with the raw amino-acid sequence, 185 residues long: Peptidyl-tRNA hydrolase (185 aa).

Tyr-14 is a binding site for tRNA. The Proton acceptor role is filled by His-19. TRNA contacts are provided by Tyr-65, Asn-67, and Asn-113.

Belongs to the PTH family. In terms of assembly, monomer.

It localises to the cytoplasm. The enzyme catalyses an N-acyl-L-alpha-aminoacyl-tRNA + H2O = an N-acyl-L-amino acid + a tRNA + H(+). Its function is as follows. Hydrolyzes ribosome-free peptidyl-tRNAs (with 1 or more amino acids incorporated), which drop off the ribosome during protein synthesis, or as a result of ribosome stalling. Catalyzes the release of premature peptidyl moieties from peptidyl-tRNA molecules trapped in stalled 50S ribosomal subunits, and thus maintains levels of free tRNAs and 50S ribosomes. The protein is Peptidyl-tRNA hydrolase of Rickettsia canadensis (strain McKiel).